Here is a 296-residue protein sequence, read N- to C-terminus: Ribosomal RNA small subunit methyltransferase A (296 aa).

S-adenosyl-L-methionine-binding residues include Asn-40, Val-42, Gly-67, Glu-88, Asp-118, and Asn-137.

The protein belongs to the class I-like SAM-binding methyltransferase superfamily. rRNA adenine N(6)-methyltransferase family. RsmA subfamily.

It is found in the cytoplasm. It catalyses the reaction adenosine(1518)/adenosine(1519) in 16S rRNA + 4 S-adenosyl-L-methionine = N(6)-dimethyladenosine(1518)/N(6)-dimethyladenosine(1519) in 16S rRNA + 4 S-adenosyl-L-homocysteine + 4 H(+). In terms of biological role, specifically dimethylates two adjacent adenosines (A1518 and A1519) in the loop of a conserved hairpin near the 3'-end of 16S rRNA in the 30S particle. May play a critical role in biogenesis of 30S subunits. The protein is Ribosomal RNA small subunit methyltransferase A of Rhodococcus opacus (strain B4).